Consider the following 206-residue polypeptide: RNA pyrophosphohydrolase (206 aa).

Residues 6–149 (GYRPNVGIVL…KRGVYARALR (144 aa)) enclose the Nudix hydrolase domain. The Nudix box motif lies at 38-59 (GGMNTDETPVEAMYRELQEETG). The segment at 175–206 (MPGHTAGHDRPRKRPRTRGYWPKKATGDGPAS) is disordered.

The protein belongs to the Nudix hydrolase family. RppH subfamily. A divalent metal cation serves as cofactor.

Functionally, accelerates the degradation of transcripts by removing pyrophosphate from the 5'-end of triphosphorylated RNA, leading to a more labile monophosphorylated state that can stimulate subsequent ribonuclease cleavage. This is RNA pyrophosphohydrolase from Stenotrophomonas maltophilia (strain K279a).